Here is a 448-residue protein sequence, read N- to C-terminus: Histidinol dehydrogenase (448 aa).

NAD(+) is bound by residues tyrosine 136, glutamine 197, and asparagine 220. The substrate site is built by serine 243, glutamine 265, and histidine 268. Residues glutamine 265 and histidine 268 each contribute to the Zn(2+) site. Residues glutamate 333 and histidine 334 each act as proton acceptor in the active site. Residues histidine 334, aspartate 367, glutamate 421, and histidine 426 each contribute to the substrate site. Residue aspartate 367 coordinates Zn(2+). Histidine 426 is a binding site for Zn(2+).

The protein belongs to the histidinol dehydrogenase family. It depends on Zn(2+) as a cofactor.

The enzyme catalyses L-histidinol + 2 NAD(+) + H2O = L-histidine + 2 NADH + 3 H(+). Its pathway is amino-acid biosynthesis; L-histidine biosynthesis; L-histidine from 5-phospho-alpha-D-ribose 1-diphosphate: step 9/9. In terms of biological role, catalyzes the sequential NAD-dependent oxidations of L-histidinol to L-histidinaldehyde and then to L-histidine. In Pseudomonas syringae pv. syringae (strain B728a), this protein is Histidinol dehydrogenase.